The following is an 83-amino-acid chain: Small ribosomal subunit protein uS17 (83 aa).

This sequence belongs to the universal ribosomal protein uS17 family. In terms of assembly, part of the 30S ribosomal subunit.

In terms of biological role, one of the primary rRNA binding proteins, it binds specifically to the 5'-end of 16S ribosomal RNA. In Magnetococcus marinus (strain ATCC BAA-1437 / JCM 17883 / MC-1), this protein is Small ribosomal subunit protein uS17.